A 420-amino-acid chain; its full sequence is Signal recognition particle receptor FtsY (420 aa).

Residues 28–62 (DLDRAMGKVAPDNKKTRDAKAAADARLAAEAEEAK) are compositionally biased toward basic and acidic residues. A disordered region spans residues 28 to 118 (DLDRAMGKVA…PETPESVGSR (91 aa)). Residues 63 to 104 (AATAAEPAKSAESAKAEPAPAAQAEPEPAAAPKPESQPASKP) show a composition bias toward low complexity. GTP contacts are provided by residues 227-234 (GVNGTGKT), 310-314 (DTAGR), and 372-375 (SKLD).

It belongs to the GTP-binding SRP family. FtsY subfamily. As to quaternary structure, part of the signal recognition particle protein translocation system, which is composed of SRP and FtsY.

The protein localises to the cell membrane. Its subcellular location is the cytoplasm. The catalysed reaction is GTP + H2O = GDP + phosphate + H(+). Functionally, involved in targeting and insertion of nascent membrane proteins into the cytoplasmic membrane. Acts as a receptor for the complex formed by the signal recognition particle (SRP) and the ribosome-nascent chain (RNC). The sequence is that of Signal recognition particle receptor FtsY from Bifidobacterium longum (strain NCC 2705).